Here is a 227-residue protein sequence, read N- to C-terminus: Cytidylate kinase (227 aa).

12-20 (GPSGAGKGT) provides a ligand contact to ATP.

It belongs to the cytidylate kinase family. Type 1 subfamily.

Its subcellular location is the cytoplasm. The catalysed reaction is CMP + ATP = CDP + ADP. It catalyses the reaction dCMP + ATP = dCDP + ADP. This chain is Cytidylate kinase, found in Photorhabdus laumondii subsp. laumondii (strain DSM 15139 / CIP 105565 / TT01) (Photorhabdus luminescens subsp. laumondii).